Reading from the N-terminus, the 99-residue chain is NADH-quinone oxidoreductase subunit K (99 aa).

A run of 3 helical transmembrane segments spans residues 3 to 23 (PDNY…GVLL), 28 to 48 (IVMF…FVTF), and 59 to 79 (VVAF…LAII).

This sequence belongs to the complex I subunit 4L family. NDH-1 is composed of 14 different subunits. Subunits NuoA, H, J, K, L, M, N constitute the membrane sector of the complex.

It is found in the cell membrane. The enzyme catalyses a quinone + NADH + 5 H(+)(in) = a quinol + NAD(+) + 4 H(+)(out). In terms of biological role, NDH-1 shuttles electrons from NADH, via FMN and iron-sulfur (Fe-S) centers, to quinones in the respiratory chain. The immediate electron acceptor for the enzyme in this species is believed to be a menaquinone. Couples the redox reaction to proton translocation (for every two electrons transferred, four hydrogen ions are translocated across the cytoplasmic membrane), and thus conserves the redox energy in a proton gradient. This chain is NADH-quinone oxidoreductase subunit K, found in Mycolicibacterium vanbaalenii (strain DSM 7251 / JCM 13017 / BCRC 16820 / KCTC 9966 / NRRL B-24157 / PYR-1) (Mycobacterium vanbaalenii).